A 685-amino-acid chain; its full sequence is A-type ATP synthase subunit I (685 aa).

The next 7 membrane-spanning stretches (helical) occupy residues 172–192, 348–368, 394–414, 464–484, 538–558, 604–624, and 626–646; these read VGGLAAVEASGGSVVVAVAVP, EIVPTVFLAITLPLTFALMFP, VIAVMGGASVVSGLLAGEVFG, LFMGAFMLSFGTFLGVVNGVI, LVLAGSVLGLAWMLLAGPIIY, MFVIYYLTVMIMQGGILADVV, and ALLYVGGNLAVAAMEGLLAFA.

It belongs to the V-ATPase 116 kDa subunit family. In terms of assembly, has multiple subunits with at least A(3), B(3), C, D, E, F, H, I and proteolipid K(x).

The protein resides in the cell membrane. In terms of biological role, component of the A-type ATP synthase that produces ATP from ADP in the presence of a proton gradient across the membrane. The chain is A-type ATP synthase subunit I from Aeropyrum pernix (strain ATCC 700893 / DSM 11879 / JCM 9820 / NBRC 100138 / K1).